We begin with the raw amino-acid sequence, 425 residues long: Serine--tRNA ligase (425 aa).

231-233 (TAE) provides a ligand contact to L-serine. Residue 262 to 264 (RSE) coordinates ATP. Glutamate 285 lines the L-serine pocket. 349–352 (EISS) serves as a coordination point for ATP. L-serine is bound at residue serine 385.

This sequence belongs to the class-II aminoacyl-tRNA synthetase family. Type-1 seryl-tRNA synthetase subfamily. As to quaternary structure, homodimer. The tRNA molecule binds across the dimer.

It localises to the cytoplasm. The enzyme catalyses tRNA(Ser) + L-serine + ATP = L-seryl-tRNA(Ser) + AMP + diphosphate + H(+). It carries out the reaction tRNA(Sec) + L-serine + ATP = L-seryl-tRNA(Sec) + AMP + diphosphate + H(+). The protein operates within aminoacyl-tRNA biosynthesis; selenocysteinyl-tRNA(Sec) biosynthesis; L-seryl-tRNA(Sec) from L-serine and tRNA(Sec): step 1/1. Its function is as follows. Catalyzes the attachment of serine to tRNA(Ser). Is also able to aminoacylate tRNA(Sec) with serine, to form the misacylated tRNA L-seryl-tRNA(Sec), which will be further converted into selenocysteinyl-tRNA(Sec). This chain is Serine--tRNA ligase, found in Bacillus licheniformis (strain ATCC 14580 / DSM 13 / JCM 2505 / CCUG 7422 / NBRC 12200 / NCIMB 9375 / NCTC 10341 / NRRL NRS-1264 / Gibson 46).